The following is a 499-amino-acid chain: Neuronal acetylcholine receptor subunit alpha-7 (499 aa).

The N-terminal stretch at 1 to 19 is a signal peptide; that stretch reads MRGSLCLALAASILHVSLQ. The Extracellular portion of the chain corresponds to 20–230; sequence GEFQRKLYKD…VSIRRRTLYY (211 aa). The Ca(2+) site is built by arginine 39 and valine 41. Asparagine 43, asparagine 87, and asparagine 130 each carry an N-linked (GlcNAc...) asparagine glycan. Cysteines 147 and 161 form a disulfide. Positions 169 and 207 each coordinate Ca(2+). Cysteines 209 and 210 form a disulfide. 3 consecutive transmembrane segments (helical) span residues 231–251, 259–279, and 292–312; these read GLNLLIPCVLISALALLVFLL, ISLGITVLLSLTVFMLLVAEI, and QYFASTMIIVGLSVVVTVIVL. The interval 257 to 264 is essential for TMEM35A/NACHO-mediated proper subunit assembly and trafficking to cell membrane; that stretch reads EKISLGIT. The Cytoplasmic segment spans residues 313–466; it reads QYHHHDPDGG…WKFAACVVDR (154 aa). Residues 467–487 traverse the membrane as a helical segment; sequence LCLMAFSVFTILCTIGILMSA.

It belongs to the ligand-gated ion channel (TC 1.A.9) family. Acetylcholine receptor (TC 1.A.9.1) subfamily. Alpha-7/CHRNA7 sub-subfamily. As to quaternary structure, homopentamer. Homooligomer of the short form gives rise to unfunctional channels, as does coexpression of both long and short forms of the receptor. Can also form heteropentamers with CHRNB2, mainly found in basal forebrain cholinergic neurons. Interacts with RIC3; which is required for proper folding and assembly. Interacts with LYPD6. Interacts with CANX. Post-translationally, glycosylations at Asn-43, Asn-87 and Asn-130 are essential for TMEM35A/NACHO-mediated proper subunit assembly and trafficking to the cell membrane. In terms of tissue distribution, at least in chromaffin cells.

The protein resides in the postsynaptic cell membrane. Its subcellular location is the cell membrane. The catalysed reaction is Ca(2+)(in) = Ca(2+)(out). It carries out the reaction K(+)(in) = K(+)(out). It catalyses the reaction Na(+)(in) = Na(+)(out). The enzyme catalyses choline(out) = choline(in). The catalysed reaction is NH4(+)(in) = NH4(+)(out). It carries out the reaction L-arginine(in) = L-arginine(out). It catalyses the reaction guanidine(out) = guanidine(in). Activated by a myriad of ligands such as acetylcholine, cytisine, nicotine, choline and epibatidine. Oligomeric amyloid-beta protein 42 activates specifially CHRNA7:CHRNB2 nAchRs. Activity is modulated by positive allosteric modulators (PAMs), such as flavonoids, with a wide range of chemical diversity, pharmacological sensitivity and efficacy. AChR activity is inhibited by the antagonists alpha-conotoxons RgIA, ImI and ImII, small disulfide-constrained peptides from cone snails. Alpha-conotoxin PnIC selectively inhibits CHRNA7:CHRNB2 over CHRNA7 homopentamer. In terms of biological role, component of neuronal acetylcholine receptors (nAChRs) that function as pentameric, ligand-gated cation channels with high calcium permeability among other activities. nAChRs are excitatory neurotrasnmitter receptors formed by a collection of nAChR subunits known to mediate synaptic transmission in the nervous system and the neuromuscular junction. Each nAchR subunit confers differential attributes to channel properties, including activation, deactivation and desensitization kinetics, pH sensitivity, cation permeability, and binding to allosteric modulators. CHRNA7 forms homopentameric neuronal acetylcholine receptors abundantly expressed in the central nervous system, characterized by fast desensitization and high calcium permeability. Also forms heteropentamers with CHRNB2, mainly expressed in basal forebrain cholinergic neurons. Involved in the modulation of calcium-dependent signaling pathways and influences the release of neurotransmitters, including dopamine, glutamate and GABA. Also expressed in non-neuronal cells such as immune cells like lymphocytes, monocytes and macrophages. In T cells, activation induces metabotropic signaling that results in an increase of intracellular Ca2+ concentrations, independent of ionotropic receptor functions. In macrophages, required for acetylcholine-mediated inhibition of TNF and other inflammatory cytokine release. Once activated by acetylcholine, nicotine or other agonists, selectively inhibits production of pro-inflammatory cytokines while leaving anti-inflammatory cytokines undisturbed. Stimulates the cholinergic anti-inflammatory pathway, controlling inflammation by inhibiting NFKB nuclear translocation and activating the JAK2-STAT3 pathway, independently of ion channel activity. Also expressed in the urothelium where it modulates reflex bladder activity by increasing intracellular calcium through internal stores and decreasing basal ATP release. This Bos taurus (Bovine) protein is Neuronal acetylcholine receptor subunit alpha-7 (CHRNA7).